We begin with the raw amino-acid sequence, 103 residues long: MSCTASYAGMTTPVKDKEGHGIPCLQPIDVVECTYQYFTKSRNKLSLRVGDLIYVLTKGSNGWWDGVLIRHSANNNNNSLILDRGWFPPSFYTVHSKRTTRGA.

One can recognise an SH3 domain in the interval 26 to 97; the sequence is QPIDVVECTY…PPSFYTVHSK (72 aa).

This chain is Putative truncated guanine nucleotide exchange factor YLL017W, found in Saccharomyces cerevisiae (strain ATCC 204508 / S288c) (Baker's yeast).